We begin with the raw amino-acid sequence, 152 residues long: Ribosome maturation factor RimP (152 aa).

It belongs to the RimP family.

It localises to the cytoplasm. Required for maturation of 30S ribosomal subunits. This is Ribosome maturation factor RimP from Citrobacter koseri (strain ATCC BAA-895 / CDC 4225-83 / SGSC4696).